Reading from the N-terminus, the 419-residue chain is UDP-N-acetylglucosamine 1-carboxyvinyltransferase (419 aa).

A phosphoenolpyruvate-binding site is contributed by 22 to 23 (KN). Residue Arg93 participates in UDP-N-acetyl-alpha-D-glucosamine binding. Catalysis depends on Cys117, which acts as the Proton donor. A 2-(S-cysteinyl)pyruvic acid O-phosphothioketal modification is found at Cys117. 2 residues coordinate UDP-N-acetyl-alpha-D-glucosamine: Asp306 and Ile328.

The protein belongs to the EPSP synthase family. MurA subfamily.

The protein localises to the cytoplasm. It catalyses the reaction phosphoenolpyruvate + UDP-N-acetyl-alpha-D-glucosamine = UDP-N-acetyl-3-O-(1-carboxyvinyl)-alpha-D-glucosamine + phosphate. Its pathway is cell wall biogenesis; peptidoglycan biosynthesis. Its function is as follows. Cell wall formation. Adds enolpyruvyl to UDP-N-acetylglucosamine. The protein is UDP-N-acetylglucosamine 1-carboxyvinyltransferase of Idiomarina loihiensis (strain ATCC BAA-735 / DSM 15497 / L2-TR).